Reading from the N-terminus, the 132-residue chain is MKLFIIIVVTSLTISKVFDKTLVTIEARNLRKMDRHEHFNANEDFVEAKMLKKIDNKNNLNNRCINDFAPTNPGHNSGIGHPKVINNKFTKDFAPTNPGHSPGIGHLRVVNNKFTNDFAPTNPGNSPGIRHP.

The signal sequence occupies residues 1-19 (MKLFIIIVVTSLTISKVFD). The propeptide occupies 20 to 66 (KTLVTIEARNLRKMDRHEHFNANEDFVEAKMLKKIDNKNNLNNRCIN). Hydroxyproline occurs at positions 70 and 73. A propeptide spanning residues 82-91 (PKVINNKFTK) is cleaved from the precursor. Residues Pro95, Pro98, and Pro102 each carry the hydroxyproline modification. The propeptide occupies 107–116 (LRVVNNKFTN). Hydroxyproline is present on residues Pro120, Pro123, and Pro127. A propeptide is located at residue Pro132.

The protein belongs to the C-terminally encoded plant signaling peptide (CEP) family. Interacts with CEP receptors (e.g. CEPR1 and CEPR2). The mature small signaling peptide is generated by proteolytic processing of the longer precursor.

It localises to the secreted. The protein localises to the extracellular space. The protein resides in the apoplast. Extracellular signaling peptide that may regulate primary root growth rate and systemic nitrogen (N)-demand signaling. The protein is Precursor of CEP10 of Arabidopsis thaliana (Mouse-ear cress).